The primary structure comprises 282 residues: Bifunctional protein FolD (282 aa).

Residues 165–167 (GAS) and Ile231 each bind NADP(+).

This sequence belongs to the tetrahydrofolate dehydrogenase/cyclohydrolase family. Homodimer.

The enzyme catalyses (6R)-5,10-methylene-5,6,7,8-tetrahydrofolate + NADP(+) = (6R)-5,10-methenyltetrahydrofolate + NADPH. The catalysed reaction is (6R)-5,10-methenyltetrahydrofolate + H2O = (6R)-10-formyltetrahydrofolate + H(+). It participates in one-carbon metabolism; tetrahydrofolate interconversion. Its function is as follows. Catalyzes the oxidation of 5,10-methylenetetrahydrofolate to 5,10-methenyltetrahydrofolate and then the hydrolysis of 5,10-methenyltetrahydrofolate to 10-formyltetrahydrofolate. The polypeptide is Bifunctional protein FolD (Francisella tularensis subsp. mediasiatica (strain FSC147)).